We begin with the raw amino-acid sequence, 219 residues long: Cysteine dioxygenase (219 aa).

Fe cation is bound by residues His106, His108, and His166. The segment at residues 113-183 (CVMKILHGSL…NDFAISLHLY (71 aa)) is a cross-link (3'-(S-cysteinyl)-tyrosine (Cys-Tyr)).

The protein belongs to the cysteine dioxygenase family. It depends on Fe cation as a cofactor. In terms of processing, the thioether cross-link between Cys-113 and Tyr-183 plays a structural role through stabilizing the Fe(2+) ion, and prevents the production of highly damaging free hydroxyl radicals by holding the oxygen radical via hydroxyl hydrogen.

It catalyses the reaction L-cysteine + O2 = 3-sulfino-L-alanine + H(+). Cysteine dioxygenase involved in sulfite formation from cysteine. Required for keratin degradation and plays an important role in filamentous growth and virulence. The sequence is that of Cysteine dioxygenase from Arthroderma benhamiae (Trichophyton mentagrophytes).